The sequence spans 253 residues: Proteasome subunit alpha (253 aa).

Positions 232–242 (AAGASTAGEAG) are enriched in low complexity. The tract at residues 232 to 253 (AAGASTAGEAGSAEDEGSDDEK) is disordered. Residues 243–253 (SAEDEGSDDEK) are compositionally biased toward acidic residues.

Belongs to the peptidase T1A family. The 20S proteasome core is composed of 14 alpha and 14 beta subunits that assemble into four stacked heptameric rings, resulting in a barrel-shaped structure. The two inner rings, each composed of seven catalytic beta subunits, are sandwiched by two outer rings, each composed of seven alpha subunits. The catalytic chamber with the active sites is on the inside of the barrel. Has a gated structure, the ends of the cylinder being occluded by the N-termini of the alpha-subunits. Is capped by the proteasome-associated ATPase, ARC.

It is found in the cytoplasm. It functions in the pathway protein degradation; proteasomal Pup-dependent pathway. Its activity is regulated as follows. The formation of the proteasomal ATPase ARC-20S proteasome complex, likely via the docking of the C-termini of ARC into the intersubunit pockets in the alpha-rings, may trigger opening of the gate for substrate entry. Interconversion between the open-gate and close-gate conformations leads to a dynamic regulation of the 20S proteasome proteolysis activity. Its function is as follows. Component of the proteasome core, a large protease complex with broad specificity involved in protein degradation. The polypeptide is Proteasome subunit alpha (Streptomyces avermitilis (strain ATCC 31267 / DSM 46492 / JCM 5070 / NBRC 14893 / NCIMB 12804 / NRRL 8165 / MA-4680)).